Here is a 517-residue protein sequence, read N- to C-terminus: Beta-galactoside alpha-2,6-sialyltransferase 2 (517 aa).

Residues 1-10 lie on the Cytoplasmic side of the membrane; that stretch reads MKPNLKQWKQ. The helical; Signal-anchor for type II membrane protein transmembrane segment at 11–31 threads the bilayer; the sequence is FMLFGICAWGLLFLVIFVYFT. Over 32–517 the chain is Lumenal; the sequence is DSNSVEPVPS…IHCPIKDHIT (486 aa). N-linked (GlcNAc...) asparagine glycosylation is found at Asn201, Asn298, and Asn328. Intrachain disulfides connect Cys244–Cys510, Cys287–Cys439, and Cys457–Cys468.

This sequence belongs to the glycosyltransferase 29 family.

It localises to the golgi apparatus. The protein localises to the golgi stack membrane. It carries out the reaction a beta-D-galactoside + CMP-N-acetyl-beta-neuraminate = an N-acetyl-alpha-neuraminyl-(2-&gt;6)-beta-D-galactosyl derivative + CMP + H(+). Transfers sialic acid from the donor of substrate CMP-sialic acid to galactose containing acceptor substrates. This Xenopus tropicalis (Western clawed frog) protein is Beta-galactoside alpha-2,6-sialyltransferase 2 (st6gal2).